We begin with the raw amino-acid sequence, 266 residues long: Maltodextrose utilization protein MalA (266 aa).

In terms of biological role, has a role in maltotetraose utilization. This chain is Maltodextrose utilization protein MalA (malA), found in Streptococcus pneumoniae (strain ATCC BAA-255 / R6).